Here is a 218-residue protein sequence, read N- to C-terminus: Cytidylate kinase (218 aa).

7-15 (GPSASGKSS) is a binding site for ATP.

This sequence belongs to the cytidylate kinase family. Type 1 subfamily.

It localises to the cytoplasm. It catalyses the reaction CMP + ATP = CDP + ADP. The catalysed reaction is dCMP + ATP = dCDP + ADP. In Borrelia duttonii (strain Ly), this protein is Cytidylate kinase.